The primary structure comprises 1039 residues: Integrin alpha-IIb (1039 aa).

An N-terminal signal peptide occupies residues 1–31; the sequence is MARALCPLQALWLLEWVLLLLGPCAAPPAWA. The Extracellular segment spans residues 32–993; it reads LNLDPVQLTF…TQLLRALEER (962 aa). FG-GAP repeat units lie at residues 35 to 96, 110 to 173, 187 to 238, 251 to 305, 306 to 371, 373 to 432, and 435 to 496; these read DPVQ…GGQC, VGSQ…RRAE, VEND…FSSY, SLSF…DSYY, QRLH…PHAL, APSL…GLRS, and SQVL…VQDS. Residue N46 is glycosylated (N-linked (GlcNAc...) asparagine). 3 disulfide bridges follow: C87-C96, C138-C161, and C177-C198. Ca(2+) contacts are provided by E274, D276, and D278. N-linked (GlcNAc...) asparagine glycosylation is present at N280. Residues T281, E283, D328, N330, D332, R334, D336, D396, D398, D400, Y402, D404, D457, D459, N461, Y463, and D465 each coordinate Ca(2+). 2 cysteine pairs are disulfide-bonded: C504/C515 and C521/C576. N601 is a glycosylation site (N-linked (GlcNAc...) asparagine). 4 disulfides stabilise this stretch: C633/C639, C705/C718, C857/C921, and C911/C916. N-linked (GlcNAc...) asparagine glycosylation is present at N711. O-linked (GalNAc...) serine; in variant S-874 glycosylation occurs at I874. The O-linked (GalNAc...) serine glycan is linked to S878. The residue at position 891 (Q891) is a Pyrrolidone carboxylic acid; in light chain form 1. N-linked (GlcNAc...) asparagine glycosylation occurs at N962. The helical transmembrane segment at 994–1019 threads the bilayer; the sequence is AIPIWWVLVGVLGGLLLLTILVLAMW. At 1020 to 1039 the chain is on the cytoplasmic side; sequence KVGFFKRNRPPLEEDDEEGE. A GFFKR motif motif is present at residues 1022 to 1026; it reads GFFKR.

Belongs to the integrin alpha chain family. As to quaternary structure, heterodimer of an alpha and a beta subunit. The alpha subunit is composed of a heavy and a light chain linked by a disulfide bond. Alpha-IIb associates with beta-3. Directly interacts with RNF181. Interacts (via C-terminus cytoplasmic tail region) with CIB1; the interaction is direct and calcium-dependent. Interacts (via C-terminus cytoplasmic tail region) with CIB2, CIB3 and CIB4; the interactions are stabilized/increased in a calcium and magnesium-dependent manner. ITGA2B:ITGB3 interacts with PPIA/CYPA; the interaction is ROS and PPIase activity-dependent and is increased in the presence of thrombin. ITGA2B:ITGB3 interacts with SELP (via C-type lectin domain); the interaction mediates cell-cell interaction and adhesion. Post-translationally, cleaved by ELANE; the cleavage promotes activation of platelet fibrinogen receptor integrin alpha-IIb/beta-3. Isoform 1 and isoform 2 are expressed in platelets and megakaryocytes, but not in reticulocytes. Not detected in Jurkat, nor in U937 cell lines. Isoform 3 is expressed in prostate adenocarcinoma, as well as in several erythroleukemia, prostate adenocarcinoma and melanoma cell lines, including PC-3, DU-145, HEL, WM983A, WM983B and WM35. Not detected in platelets, nor in normal prostate (at protein level).

The protein resides in the membrane. Its function is as follows. Integrin alpha-IIb/beta-3 is a receptor for fibronectin, fibrinogen, plasminogen, prothrombin, thrombospondin and vitronectin. It recognizes the sequence R-G-D in a wide array of ligands. It recognizes the sequence H-H-L-G-G-G-A-K-Q-A-G-D-V in fibrinogen gamma chain. Following activation integrin alpha-IIb/beta-3 brings about platelet/platelet interaction through binding of soluble fibrinogen. This step leads to rapid platelet aggregation which physically plugs ruptured endothelial cell surface. This Homo sapiens (Human) protein is Integrin alpha-IIb (ITGA2B).